A 144-amino-acid polypeptide reads, in one-letter code: Small ribosomal subunit protein uS12 (144 aa).

Residue D103 is modified to 3-methylthioaspartic acid. Positions 125-144 are disordered; the sequence is QQGRSRYGAKKGKAAPAKKK. The segment covering 131-144 has biased composition (basic residues); sequence YGAKKGKAAPAKKK.

The protein belongs to the universal ribosomal protein uS12 family. As to quaternary structure, part of the 30S ribosomal subunit. Contacts proteins S8 and S17. May interact with IF1 in the 30S initiation complex.

Its function is as follows. With S4 and S5 plays an important role in translational accuracy. In terms of biological role, interacts with and stabilizes bases of the 16S rRNA that are involved in tRNA selection in the A site and with the mRNA backbone. Located at the interface of the 30S and 50S subunits, it traverses the body of the 30S subunit contacting proteins on the other side and probably holding the rRNA structure together. The combined cluster of proteins S8, S12 and S17 appears to hold together the shoulder and platform of the 30S subunit. The protein is Small ribosomal subunit protein uS12 of Dehalococcoides mccartyi (strain ATCC BAA-2100 / JCM 16839 / KCTC 5957 / BAV1).